An 841-amino-acid polypeptide reads, in one-letter code: MNLLYRKTKLEWRQHKEEEAKRSSSKEVAPAGSAGPAAGQGPGVRVRDIASLRRSLRMGFMTMPASQEHTPHPCRSAMAPRSLSCHSVGSMDSVGGGPGGASGGLTEDSSTRRPPAKPRRHPSTKLSMVGPGSGAETPPSKKAGSQKPTPEGRESSRKVPPQKPRRSPNTQLSVSFDESCPPGPSPRGGNLPLQRLTRGSRVAGDPDVGAQEEPVYIEMVGDVFRGGGRSGGGLAGPPLGGGGPTPPAGADSDSEESEAIYEEMKYPLPEEAGEGRANGPPPLTATSPPQQPHALPPHAHRRPASALPSRRDGTPTKTTPCEIPPPFPNLLQHRPPLLAFPQAKSASRTPGDGVSRLPVLCHSKEPAGSTPAPQVPARERETPPPPPPPPAANLLLLGPSGRARSHSTPLPPQGSGQPRGERELPNSHSMICPKAAGAPAAPPAPAALLPGPPKDKAVSYTMVYSAVKVTTHSVLPAGPPLGAGEPKTEKEISVLHGMLCTSSRPPVPGKTSPHGGAMGAAAGVLHHRGCLASPHSLPDPTVGPLTPLWTYPATAAGLKRPPAYESLKAGGVLNKGCGVGAPSPMVKIQLQEQGTDGGAFASISCAHVIASAGTPEEEEEEVGAATFGAGWALQRKVLYGGRKAKELDKVEDGARAWNGSAEGPGKVEREDRGPGTSGIPVRSQGAEGLLARIHHGDRGGSRTALPIPCQTFPACHRNGDFTGGYRLGRSASTSGVRQVVLHTPRPCSQPRDALSQPHPALPLPLPLPPQPARERDGKLLEVIERKRCVCKEIKARHRPDRGLCKQESMPILPSWRRGPEPRKSGTPPCRRQHTVLWDTAI.

5 disordered regions span residues Met1–Arg45, Pro64–Leu448, Arg655–Ile679, Arg745–Pro769, and Leu812–His833. A compositionally biased stretch (basic and acidic residues) spans Thr8 to Ser25. Over residues Lys26–Gly39 the composition is skewed to low complexity. Positions Ser76 to Pro186 are involved in CYFIP1- and NCKAP1-binding. Positions Val94–Gly103 are enriched in gly residues. Positions Pro114–Ser123 are enriched in basic residues. A compositionally biased stretch (polar residues) spans Ser167–Phe176. A compositionally biased stretch (gly residues) spans Phe224 to Gly243. Positions Ser252–Tyr261 are enriched in acidic residues. Positions Gly279–Leu295 are enriched in pro residues. The segment covering Pro759 to Pro769 has biased composition (pro residues).

This sequence belongs to the NYAP family. As to quaternary structure, interacts with ACOT9, ARHGAP26 and PIK3R2. Interacts with components of the WAVE1 complex, CYFIP1 and NCKAP1; this interaction mediates PI3K-WAVE1 association and actin cytoskeleton remodeling. Post-translationally, phosphorylated on tyrosine residues by FYN upon stimulation with CNTN5.

Activates PI3K and concomitantly recruits the WAVE1 complex to the close vicinity of PI3K and regulates neuronal morphogenesis. The chain is Neuronal tyrosine-phosphorylated phosphoinositide-3-kinase adapter 1 (NYAP1) from Homo sapiens (Human).